We begin with the raw amino-acid sequence, 1071 residues long: SLIT-ROBO Rho GTPase-activating protein 2 (1071 aa).

The region spanning 22–325 is the F-BAR domain; sequence KEIRAQLTEQ…AVENLDATSD (304 aa). Basic and acidic residues predominate over residues 181–203; it reads LKEAEKQEEKQIGKSVKQEDRQT. Residues 181-211 are disordered; that stretch reads LKEAEKQEEKQIGKSVKQEDRQTPRSPDSTA. Position 206 is a phosphoserine (serine 206). A coiled-coil region spans residues 363 to 401; sequence QSELVQRRQQLQSRLSTLKIENEEVKKTMEATLQTIQDI. Phosphoserine is present on residues serine 427, serine 500, serine 691, serine 695, and serine 724. Positions 489–679 constitute a Rho-GAP domain; the sequence is ARRSSTVRKQ…TIIIQHENIF (191 aa). The interval 703 to 726 is disordered; it reads THGETISAEDSTQDVTAEHHTSDD. Positions 728 to 787 constitute an SH3 domain; that stretch reads CEPIEAIAKFDYVGRTARELSFKKGASLLLYQRASDDWWEGRHNGIDGLIPHQYIVVQDT. Disordered stretches follow at residues 794–820 and 835–936; these read RSSP…GASC and NKQR…NHRP. The residue at position 795 (serine 795) is a Phosphoserine. Composition is skewed to polar residues over residues 857–867, 874–885, and 897–907; these read LGSSLTDSSSP, RPSSQPIMSQNL, and GHGSLNSISRH. Serine 916 carries the post-translational modification Phosphoserine. Over residues 919–933 the composition is skewed to polar residues; that stretch reads IRKTATAGRSKSFNN. The residue at position 927 (arginine 927) is a Symmetric dimethylarginine; by PRMT5. Serine 930 is subject to Phosphoserine. Residues 940–968 adopt a coiled-coil conformation; that stretch reads EVIAQDIEATMNSALNELQELERQSSAKH. The disordered stretch occupies residues 983-1012; sequence SPVVAPTSEPSSPLHTQLLKDPEPAFQRSA. A phosphoserine mark is found at serine 990, serine 994, serine 1013, and serine 1027. A disordered region spans residues 1029–1071; that stretch reads KMAAPVKPPATRPKPTVFPKTNATSPGVNSSASPQSTDKSCTV. Positions 1047-1071 are enriched in polar residues; it reads PKTNATSPGVNSSASPQSTDKSCTV.

As to quaternary structure, homodimer. Forms a heterooligomer with SRGAP1 and SRGAP3 through its F-BAR domain. Interacts (via SH3 domain) with GPHN. Interacts (via SH3 domain) with FMNL1 (activated by RAC1); regulates the actin filament severing activity of FMNL1 and actin dynamics. Interacts (via SH3 domain) with FMNL3. Interacts with RAC1; specifically stimulates RAC1 GTPase activity. Interacts (via F-BAR domain) with HOMER1. Interacts with ROBO1 and ROBO2. Interacts with FASLG. Interacts with PRMT5. Post-translationally, methylation at Arg-927 is required for the stimulation of cell migration, dimerization and localization at the plasma membrane protrusions.

It localises to the cell membrane. It is found in the cell projection. The protein localises to the dendritic spine. The protein resides in the postsynaptic density. Its subcellular location is the postsynaptic cell membrane. It localises to the lamellipodium. It is found in the cytoplasmic vesicle. The protein localises to the phagosome. The protein resides in the nucleus. Its subcellular location is the cytoplasm. It localises to the cytosol. Postsynaptic RAC1 GTPase activating protein (GAP) that plays a key role in neuronal morphogenesis and migration mainly during development of the cerebral cortex. Regulates excitatory and inhibitory synapse maturation and density in cortical pyramidal neurons. SRGAP2/SRGAP2A limits excitatory and inhibitory synapse density through its RAC1-specific GTPase activating activity, while it promotes maturation of both excitatory and inhibitory synapses through its ability to bind to the postsynaptic scaffolding protein HOMER1 at excitatory synapses, and the postsynaptic protein GPHN at inhibitory synapses. Mechanistically, acts by binding and deforming membranes, thereby regulating actin dynamics to regulate cell migration and differentiation. Promotes cell repulsion and contact inhibition of locomotion: localizes to protrusions with curved edges and controls the duration of RAC1 activity in contact protrusions. In non-neuronal cells, may also play a role in cell migration by regulating the formation of lamellipodia and filopodia. This chain is SLIT-ROBO Rho GTPase-activating protein 2, found in Rattus norvegicus (Rat).